Consider the following 282-residue polypeptide: Endonuclease V (282 aa).

Residues Asp52 and Asp126 each coordinate Mg(2+). Residues 250–282 (SLGLPGPPTPRSPKAQRPVACPKGDSGESSALC) are disordered.

Belongs to the endonuclease V family. In terms of assembly, monomer. Interacts with PABPC1; the interaction is RNA-dependent and stimulates ENDOV activity. It depends on Mg(2+) as a cofactor.

The protein localises to the cytoplasm. It is found in the nucleus. It localises to the nucleolus. Its subcellular location is the stress granule. With respect to regulation, inhibited by normal intracellular concentrations of ATP. Functionally, endoribonuclease that specifically cleaves inosine-containing RNAs: cleaves RNA at the second phosphodiester bond 3' to inosine. Active against both single-stranded and double-stranded RNAs. Has strong preference for single-stranded RNAs (ssRNAs) toward double-stranded RNAs (dsRNAs). Cleaves mRNAs and tRNAs containing inosine. Also able to cleave structure-specific dsRNA substrates containing the specific sites 5'-IIUI-3' and 5'-UIUU-3'. Inosine is present in a number of RNAs following editing; the function of inosine-specific endoribonuclease is still unclear: it could either play a regulatory role in edited RNAs, or be involved in antiviral response by removing the hyperedited long viral dsRNA genome that has undergone A-to-I editing. Binds branched DNA structures. In terms of biological role, endoribonuclease that specifically cleaves inosine-containing RNAs: cleaves RNA at the second phosphodiester bond 3' to inosine. Active against both single-stranded and double-stranded RNAs. Cleaves tRNAs containing inosine. The protein is Endonuclease V (ENDOV) of Homo sapiens (Human).